We begin with the raw amino-acid sequence, 477 residues long: RNA pseudouridine synthase 4, mitochondrial (477 aa).

The N-terminal 43 residues, 1–43 (MAKWRLATATLRRQLQSSSPTISTFKNPTKALSAAAHQSTRSY), are a transit peptide targeting the mitochondrion. Residues 34 to 55 (AAAHQSTRSYSTTQTDDSRGKW) are disordered. A compositionally biased stretch (polar residues) spans 36–48 (AHQSTRSYSTTQT). The S4 RNA-binding domain maps to 90-175 (TTALRWILRC…AKKESFQCSD (86 aa)). Asp-236 is a catalytic residue.

The protein belongs to the pseudouridine synthase RluA family.

The protein localises to the mitochondrion. The enzyme catalyses a uridine in RNA = a pseudouridine in RNA. The polypeptide is RNA pseudouridine synthase 4, mitochondrial (Arabidopsis thaliana (Mouse-ear cress)).